The primary structure comprises 329 residues: Biotin synthase (329 aa).

The 231-residue stretch at 48–278 (FLGTGVDLCS…DRKIAVCGGR (231 aa)) folds into the Radical SAM core domain. [4Fe-4S] cluster-binding residues include Cys-66, Cys-70, and Cys-73. 2 residues coordinate [2Fe-2S] cluster: Ser-143 and Cys-203.

Belongs to the radical SAM superfamily. Biotin synthase family. In terms of assembly, homodimer. It depends on [4Fe-4S] cluster as a cofactor. The cofactor is [2Fe-2S] cluster.

The enzyme catalyses (4R,5S)-dethiobiotin + (sulfur carrier)-SH + 2 reduced [2Fe-2S]-[ferredoxin] + 2 S-adenosyl-L-methionine = (sulfur carrier)-H + biotin + 2 5'-deoxyadenosine + 2 L-methionine + 2 oxidized [2Fe-2S]-[ferredoxin]. Its pathway is cofactor biosynthesis; biotin biosynthesis; biotin from 7,8-diaminononanoate: step 2/2. Its function is as follows. Catalyzes the conversion of dethiobiotin (DTB) to biotin by the insertion of a sulfur atom into dethiobiotin via a radical-based mechanism. This chain is Biotin synthase, found in Geobacter sulfurreducens (strain ATCC 51573 / DSM 12127 / PCA).